We begin with the raw amino-acid sequence, 151 residues long: Large ribosomal subunit protein uL15 (151 aa).

The tract at residues Met-1–Pro-51 is disordered. Residues Ser-15–Arg-24 show a composition bias toward basic residues. Residues His-26–Met-38 are compositionally biased toward gly residues.

The protein belongs to the universal ribosomal protein uL15 family. Part of the 50S ribosomal subunit.

Functionally, binds to the 23S rRNA. This chain is Large ribosomal subunit protein uL15, found in Gloeobacter violaceus (strain ATCC 29082 / PCC 7421).